A 97-amino-acid chain; its full sequence is MGKTYRRKDLKVRDYDYFGKRKAPDGVSHKDMVENIFRSDKWRRMKGIDSEVKDELNRQLRGEVRKLKKSVYIDDDFDYNTSQRVAKRKSNECYRYS.

This is an uncharacterized protein from Enterobacteria phage T4 (Bacteriophage T4).